The primary structure comprises 313 residues: Homoserine O-succinyltransferase (313 aa).

The Acyl-thioester intermediate role is filled by Cys-142. Lys-163 and Ser-192 together coordinate substrate. The active-site Proton acceptor is the His-235. Glu-237 is an active-site residue. Arg-249 lines the substrate pocket.

Belongs to the MetA family.

It localises to the cytoplasm. The catalysed reaction is L-homoserine + succinyl-CoA = O-succinyl-L-homoserine + CoA. It participates in amino-acid biosynthesis; L-methionine biosynthesis via de novo pathway; O-succinyl-L-homoserine from L-homoserine: step 1/1. In terms of biological role, transfers a succinyl group from succinyl-CoA to L-homoserine, forming succinyl-L-homoserine. The protein is Homoserine O-succinyltransferase of Shewanella oneidensis (strain ATCC 700550 / JCM 31522 / CIP 106686 / LMG 19005 / NCIMB 14063 / MR-1).